A 23-amino-acid polypeptide reads, in one-letter code: Basic phospholipase A2 CB2 (23 aa).

It depends on Ca(2+) as a cofactor. Post-translationally, contains 7 disulfide bonds. Expressed by the venom gland.

The protein resides in the secreted. The enzyme catalyses a 1,2-diacyl-sn-glycero-3-phosphocholine + H2O = a 1-acyl-sn-glycero-3-phosphocholine + a fatty acid + H(+). Snake venom phospholipase A2 (PLA2) that shows presynaptic neurotoxicity. PLA2 catalyzes the calcium-dependent hydrolysis of the 2-acyl groups in 3-sn-phosphoglycerides. This is Basic phospholipase A2 CB2 from Crotalus durissus cumanensis (South American rattlesnake).